A 1170-amino-acid chain; its full sequence is MNELNTVSTNSSDSTKNGGTSNSPDDMDSAAAASHAIKKRTKASRACDQCRKKKIKCDYKDEKGVCSNCQRNGDRCSFDRVPLKRGPSKGYTRSTSHPRTNEIQDHNNSRSYNTFDNSNNTLNNNTGNSGDNGINSNTVPSTPSRSNSVLLPPLTQYIPQVGGIPPSFQNPAIQSTMPAGNIGQQQFWKVPYHEFQHQRKGSIDSLQSDISVRTLNPNEQLSYNTVQQSPITNKHTNDSGNANGSVTGSGSASGSGGYWSFIRTSGLLAPTDDHNGEQTRRSSSIPSLLRNTSNSLLLGGQPQLPPPQQQSQPQAHQQKLQQGQNPYSYSQFSQQQPYNPSISSFGQFAANGFHSRQGSVASEAMSPSAPAMFTSTSTNPVNVAQQTQRPQGQQVPQFSSELDGNKRRQSAPVSVTLSTDRLNGNENNNGEINNNNGSNNSGSSKDTSQHSQESVTTPAALEASSPGSTPQRSTKKRRKSYVSKKTKPKRDSSISITSKDSAHPMTTSSTIAYGQISDVDLIDTYYEFIHVGFPIIPLNKTTLTSDLLLVNTQPISNIHEVNSYVILWFRNSLELLVRVALKQKPGGKFFDNIVGVALSPSNDNNKAGFTTATARDDAEKTRRDSHNEVQDTLEVQSVFIAALNECFQKIVDIHPKFRENNDQISPKIKVIYLSTFILLNYILAFVGYDNSFVLGMSVTIFNEFKLYKLLLFPEPDVNDVKAPVDEEANTGNGNTKTSEFEIGSESAGHMNPSNSPNSMDENISHYSVLFKRLYVLLSVFDSLQSCAFGGPKLLNISIQGSTERFFSNDLGSKWCLEQSQLRLKSVLQSLKLGELMSELTRNRISMNGNRKPGFDITNSSSLLSEYVETQPLSVAQLFCKLLIGKHNFINCLLSLYDSEAGVYSDLTLDLSSKIADSLCSLISIILQVLTLILRLNPTNSIDFNYRPPNPPANNPTVQEGPSAMGSSPVAGNLNAAPPSEGNPDFYKKLLGLKQDTGTILSDLCRGIISPFAIAILHEVYNITELVKQMPTSLISIMMTATTTQNTQDTKKSQDLVMKLSNSMNEVVQITSVLTMIKPFKIFEHELNKPIMSLTGGLSSTTRNDVMWPKSGQGLRESSVMKTLLDERRTSGTQPTTAPVAAEESRLENVALENFVSIGWKLLDDSELGWY.

Residues methionine 1 to asparagine 22 are compositionally biased toward polar residues. A disordered region spans residues methionine 1–alanine 46. The zn(2)-C6 fungal-type DNA-binding region spans cysteine 47–cysteine 76. The tract at residues serine 77–serine 148 is disordered. Residues arginine 99 to asparagine 108 show a composition bias toward basic and acidic residues. Over residues asparagine 113–threonine 138 the composition is skewed to low complexity. Residues valine 139–serine 148 are compositionally biased toward polar residues. Phosphoserine occurs at positions 202, 205, 208, and 229. Polar residues predominate over residues proline 217–lysine 234. Disordered stretches follow at residues proline 217–glycine 254, alanine 269–leucine 288, serine 293–serine 343, alanine 384–threonine 506, aspartate 725–asparagine 757, and arginine 946–asparagine 974. Low complexity predominate over residues serine 239–glycine 250. The span at threonine 271–arginine 280 shows a compositional bias: basic and acidic residues. A phosphoserine mark is found at serine 283 and serine 284. Composition is skewed to low complexity over residues serine 293–proline 302, glutamine 309–serine 341, and glutamine 385–glutamine 397. 2 positions are modified to phosphoserine: serine 410 and serine 414. Polar residues predominate over residues alanine 411–leucine 422. Residues glycine 424 to serine 444 are compositionally biased toward low complexity. A compositionally biased stretch (polar residues) spans lysine 445 to threonine 457. The span at serine 473–proline 488 shows a compositional bias: basic residues. The span at serine 493–threonine 506 shows a compositional bias: polar residues. Serine 1130 carries the phosphoserine modification.

This sequence belongs to the EDS1/RGT1 family. Glucose-induced phosphorylation regulates the DNA-binding activity. Hyperphosphorylation in cells growing on high levels of glucose does prevents DNA-binding and dephosphorylation restores DNA-binding ability.

Its subcellular location is the nucleus. It is found in the cytoplasm. In terms of biological role, glucose-responsive transcription factor that regulates expression of several glucose transporter (HXT) genes in response to glucose. In the absence of glucose, it functions as a transcriptional repressor, whereas high concentrations of glucose cause it to function as a transcriptional activator. In cells growing on low levels of glucose, has a neutral role, neither repressing nor activating transcription. Binds the consensus binding site sequence 5'-CGGANNA-3', of which multiple copies are present in all HXT promoters regulated by RGT1. This Saccharomyces cerevisiae (strain YJM789) (Baker's yeast) protein is Glucose transport transcription regulator RGT1 (RGT1).